A 253-amino-acid polypeptide reads, in one-letter code: Claudin domain-containing protein 1 (253 aa).

Residues 5–25 (FATAFVIACVLSLISTIYMAA) traverse the membrane as a helical segment. 2 N-linked (GlcNAc...) asparagine glycosylation sites follow: N42 and N72. 3 consecutive transmembrane segments (helical) span residues 141 to 161 (FLLP…GLCA), 175 to 195 (ILHL…VAGI), and 216 to 236 (FCLA…FIWA).

Belongs to the PMP-22/EMP/MP20 family. Widely distributed in the adult CNS with highest expression in the corpus callosum, caudate nucleus, cerebral cortex, medulla, putamen, spinal cord, substantia nigra and subthalamic nucleus. Weak expression was detected in the adult heart.

The protein resides in the cell junction. It localises to the tight junction. Its subcellular location is the cell membrane. Functionally, plays a role in negatively regulating the permeability of cells to small molecules. This is Claudin domain-containing protein 1 (CLDND1) from Homo sapiens (Human).